The chain runs to 82 residues: Putative defensin-like protein 191 (82 aa).

The signal sequence occupies residues 1-28; sequence MAKSVNATGFITYMVIFLILTGISRVKA. Cystine bridges form between Cys-33-Cys-79, Cys-46-Cys-65, Cys-51-Cys-74, and Cys-55-Cys-76.

It belongs to the DEFL family.

The protein resides in the secreted. In Arabidopsis thaliana (Mouse-ear cress), this protein is Putative defensin-like protein 191.